We begin with the raw amino-acid sequence, 156 residues long: Arginine repressor (156 aa).

This sequence belongs to the ArgR family.

The protein resides in the cytoplasm. The protein operates within amino-acid biosynthesis; L-arginine biosynthesis [regulation]. Regulates arginine biosynthesis genes. This chain is Arginine repressor, found in Citrobacter koseri (strain ATCC BAA-895 / CDC 4225-83 / SGSC4696).